Consider the following 545-residue polypeptide: MSASWVRGDRTAAWADLSAHFAASAANFDLRTAFAGDARRFERFGVEAPHLFADLSKNWLDAPALALLLRLAREVGLEGRRDAMLAGAPLNNTEGRAVLHTALRAPRDAAPHGSEVHATLDAMLAFAERVRDTAHSGITDVVNIGIGGSDLGPQMAVPALQAYTQAGLRSHFVSNLDGHELAPLLTQLDPQSTLFIIASKTFTTQETMANAETAKAWFLARGGRDIARHFVATTTNVDAAVAFGIDTAFGFWDWVGGRYSLWSAIGLPVAIALGATHFRALLGGAHAMDRHFATAPLERNLPVLLGLLDVWYRNFHGLTSRSVAPYHQGLRRLPAYLQQLEMESNGKCVDRDGEPLPFATSPVVWGEPGTNAQHAYFQMLHQGSDVIPVEFIAVRDTSHAHLDLPPALQPLLAEQQRKLLANCLAQSQALMAGKSEAQALAERAPTAAADMPRDVLARHRSFPGNRPSTTLLLERLDPATLGALIAMYEHRVFTSGAVWGINSFDQWGVELGKAMCSELLPRLTTGDASGLDGSTVGLLRKLGTP.

The Proton donor role is filled by Glu343. Residues His374 and Lys513 contribute to the active site.

The protein belongs to the GPI family.

Its subcellular location is the cytoplasm. The catalysed reaction is alpha-D-glucose 6-phosphate = beta-D-fructose 6-phosphate. Its pathway is carbohydrate biosynthesis; gluconeogenesis. The protein operates within carbohydrate degradation; glycolysis; D-glyceraldehyde 3-phosphate and glycerone phosphate from D-glucose: step 2/4. Its function is as follows. Catalyzes the reversible isomerization of glucose-6-phosphate to fructose-6-phosphate. The polypeptide is Glucose-6-phosphate isomerase (Methylibium petroleiphilum (strain ATCC BAA-1232 / LMG 22953 / PM1)).